We begin with the raw amino-acid sequence, 1531 residues long: Protein turtle (1531 aa).

Over 1 to 858 the chain is Extracellular; that stretch reads MGVCADLGSH…PARVKHKAIT (858 aa). The interval 19-44 is disordered; that stretch reads QHNTEKSKEQQQQSQPLEIPEQRASK. Ig-like C2-type domains lie at 132–243, 253–340, 344–436, 440–529, and 536–624; these read PEDA…KNGT, PRFS…ARVI, GAVI…AYLS, PAKV…GVMD, and PAFT…MAVT. Intrachain disulfides connect Cys-150-Cys-227, Cys-275-Cys-324, Cys-366-Cys-419, Cys-462-Cys-513, and Cys-558-Cys-611. Fibronectin type-III domains are found at residues 632-728 and 760-851; these read QPHA…TLED and PPRN…VPAR. The chain crosses the membrane as a helical span at residues 859–879; sequence AGVVGGILFFIVAIILSVCAV. The Cytoplasmic portion of the chain corresponds to 880 to 1531; that stretch reads KICNKRKRRK…QAMQQMESVC (652 aa). Disordered regions lie at residues 1248–1269 and 1318–1395; these read EETR…VPLQ and NLNL…SYPR. Low complexity predominate over residues 1333 to 1349; it reads SPESRSSSSGFGSKNTS. Polar residues predominate over residues 1380–1389; that stretch reads QQAQGQTPHG.

This sequence belongs to the immunoglobulin superfamily. Turtle family. In terms of assembly, interacts with bdl. Exclusively expressed in the central nervous system.

The protein resides in the membrane. Essential protein that plays a role in the establishment of coordinated motor control. In the developing eye, involved in axonal targeting of the R7 photoreceptor. This chain is Protein turtle (tutl), found in Drosophila melanogaster (Fruit fly).